Here is a 91-residue protein sequence, read N- to C-terminus: C-C motif chemokine 5 (91 aa).

The first 23 residues, 1-23 (MKVSATAFAVLLMAAALCAPASA), serve as a signal peptide directing secretion. Disulfide bonds link Cys-33/Cys-57 and Cys-34/Cys-73.

This sequence belongs to the intercrine beta (chemokine CC) family.

The protein resides in the secreted. Functionally, chemoattractant for blood monocytes, memory T-helper cells and eosinophils. Causes the release of histamine from basophils and activates eosinophils. May activate several chemokine receptors including CCR1, CCR3, CCR4 and CCR5. May also be an agonist of the G protein-coupled receptor GPR75. Together with GPR75, may play a role in neuron survival through activation of a downstream signaling pathway involving the PI3, Akt and MAP kinases. By activating GPR75 may also play a role in insulin secretion by islet cells. The protein is C-C motif chemokine 5 (CCL5) of Bos taurus (Bovine).